The primary structure comprises 186 residues: Elongation factor P (186 aa).

This sequence belongs to the elongation factor P family.

Its subcellular location is the cytoplasm. Its pathway is protein biosynthesis; polypeptide chain elongation. Functionally, involved in peptide bond synthesis. Stimulates efficient translation and peptide-bond synthesis on native or reconstituted 70S ribosomes in vitro. Probably functions indirectly by altering the affinity of the ribosome for aminoacyl-tRNA, thus increasing their reactivity as acceptors for peptidyl transferase. This chain is Elongation factor P, found in Elusimicrobium minutum (strain Pei191).